The following is a 115-amino-acid chain: Holo-[acyl-carrier-protein] synthase (115 aa).

2 residues coordinate Mg(2+): aspartate 5 and glutamate 51.

Belongs to the P-Pant transferase superfamily. AcpS family. Mg(2+) is required as a cofactor.

Its subcellular location is the cytoplasm. The catalysed reaction is apo-[ACP] + CoA = holo-[ACP] + adenosine 3',5'-bisphosphate + H(+). Transfers the 4'-phosphopantetheine moiety from coenzyme A to a Ser of acyl-carrier-protein. The sequence is that of Holo-[acyl-carrier-protein] synthase from Helicobacter acinonychis (strain Sheeba).